A 512-amino-acid polypeptide reads, in one-letter code: Tyrosine-protein kinase Lyn (512 aa).

Positions 1–45 are disordered; it reads MGCIKSKRKDNLNDDEVDSKTQPVRNTDRTIYVRDPTSNKQQRPV. A lipid anchor (N-myristoyl glycine) is attached at glycine 2. The S-palmitoyl cysteine moiety is linked to residue cysteine 3. Serine 19 carries the post-translational modification Phosphoserine. The SH3 domain maps to 63–123; the sequence is EQGDIVVALY…PSNYVAKVNT (61 aa). Residues 129 to 226 enclose the SH2 domain; it reads WFFKDITRKD…GLCRRLEKAC (98 aa). At tyrosine 193 the chain carries Phosphotyrosine. A Phosphoserine modification is found at serine 228. One can recognise a Protein kinase domain in the interval 247 to 501; the sequence is IKLVKKLGAG…YLQSVLDDFY (255 aa). ATP-binding positions include 253–261 and lysine 275; that span reads LGAGQFGEV. 2 positions are modified to phosphotyrosine: tyrosine 306 and tyrosine 316. Aspartate 367 (proton acceptor) is an active-site residue. Tyrosine 397 is modified (phosphotyrosine; by autocatalysis). Residues tyrosine 460 and tyrosine 473 each carry the phosphotyrosine modification. Tyrosine 508 carries the post-translational modification Phosphotyrosine; by autocatalysis, CSK and MATK.

It belongs to the protein kinase superfamily. Tyr protein kinase family. SRC subfamily. In terms of assembly, interacts with TEC. Interacts (via SH2 domain) with FLT3 (tyrosine phosphorylated). Interacts with LIME1 and with CD79A upon activation of the B-cell antigen receptor. Interacts with the B-cell receptor complex. Interacts with phosphorylated THEMIS2. Interacts with EPOR. Interacts with MS4A2/FCER1B. Interaction (via the SH2 and SH3 domains) with MUC1 is stimulated by IL7 and the subsequent phosphorylation increases the binding between MUC1 and CTNNB1/beta-catenin. Interacts with ADAM15. Interacts with NDFIP2 and more weakly with NDFIP1. Interacts with FASLG. Interacts with KIT. Interacts with HCLS1. Interacts with FCGR2B. Interacts with FCGR1A; the interaction may be indirect. Interacts with CD19, CD22, CD79A and CD79B. Interacts (via SH3 domain) with CBLC, PPP1R15A and PDE4A. Interacts with TGFB1I1. Interacts (via SH3 domain) with PIK3R1, the regulatory subunit of phosphatidylinositol 3-kinase; this interaction enhances phosphatidylinositol 3-kinase activity. Interacts with CSF2RB, the common subunit of the IL3, IL5 and CSF2 receptors. Interacts with PAG1; identified in a complex with PAG1 and STAT3. Interacts with ABL1. Interacts with PTPN6/SHP-1. Interacts (via SH3 domain) with SCIMP (via proline-rich region). This interaction facilitates the phosphorylation of SCIMP on 'Tyr-96', which enhances binding of SCIMP to TLR4, and consequently the phosphorylation of TLR4 in response to stimulation by lipopolysaccharide in macrophages. Interacts with LPXN (via LD motif 3) and the interaction is induced upon B-cell antigen receptor (BCR) activation. Interacts (via SH3-domain) with ANKRD54 (via ankyrin repeat region) in an activation-independent status of LYN. Forms a multiprotein complex with ANKRD54 and HCLS1. Interacts (via SH2 and SH3 domains) with UNC119; leading to LYN activation. Interacts with CD36. Interacts with LYN. Interacts with SKAP1 and FYB1; this interaction promotes the phosphorylation of CLNK. Interacts with BCAR1/CAS and NEDD9/HEF1. In terms of processing, ubiquitinated by CBL, leading to its degradation. Autophosphorylated. Phosphorylated on tyrosine residues in response to KIT signaling. Phosphorylation at Tyr-397 is required for optimal activity. Phosphorylation at Tyr-508 inhibits kinase activity. Phosphorylated at Tyr-508 by CSK. Dephosphorylated by PTPRC/CD45. Becomes rapidly phosphorylated upon activation of the B-cell receptor and the immunoglobulin receptor FCGR1A. Phosphorylated in response to ITGB1 in B-cells. As to expression, detected in bone marrow-derived monocytes and macrophages (at protein level). Expressed predominantly in B-lymphoid and myeloid cells.

The protein resides in the cell membrane. The protein localises to the nucleus. It is found in the cytoplasm. It localises to the perinuclear region. Its subcellular location is the golgi apparatus. The protein resides in the membrane. It carries out the reaction L-tyrosyl-[protein] + ATP = O-phospho-L-tyrosyl-[protein] + ADP + H(+). Its activity is regulated as follows. Subject to autoinhibition, mediated by intramolecular interactions between the SH2 domain and the C-terminal phosphotyrosine. Phosphorylation at Tyr-397 is required for optimal activity. Phosphorylated by CSK at Tyr-508; phosphorylation at Tyr-508 inhibits kinase activity. Kinase activity is modulated by dephosphorylation by PTPRC/CD45. Inhibited by dasatinib, PP2, and SU6656. Non-receptor tyrosine-protein kinase that transmits signals from cell surface receptors and plays an important role in the regulation of innate and adaptive immune responses, hematopoiesis, responses to growth factors and cytokines, integrin signaling, but also responses to DNA damage and genotoxic agents. Functions primarily as negative regulator, but can also function as activator, depending on the context. Required for the initiation of the B-cell response, but also for its down-regulation and termination. Plays an important role in the regulation of B-cell differentiation, proliferation, survival and apoptosis, and is important for immune self-tolerance. Acts downstream of several immune receptors, including the B-cell receptor, CD79A, CD79B, CD5, CD19, CD22, FCER1, FCGR2, FCGR1A, TLR2 and TLR4. Plays a role in the inflammatory response to bacterial lipopolysaccharide. Mediates the responses to cytokines and growth factors in hematopoietic progenitors, platelets, erythrocytes, and in mature myeloid cells, such as dendritic cells, neutrophils and eosinophils. Acts downstream of EPOR, KIT, MPL, the chemokine receptor CXCR4, as well as the receptors for IL3, IL5 and CSF2. Plays an important role in integrin signaling. Regulates cell proliferation, survival, differentiation, migration, adhesion, degranulation, and cytokine release. Involved in the regulation of endothelial activation, neutrophil adhesion and transendothelial migration. Down-regulates signaling pathways by phosphorylation of immunoreceptor tyrosine-based inhibitory motifs (ITIM), that then serve as binding sites for phosphatases, such as PTPN6/SHP-1, PTPN11/SHP-2 and INPP5D/SHIP-1, that modulate signaling by dephosphorylation of kinases and their substrates. Phosphorylates LIME1 in response to CD22 activation. Phosphorylates BTK, CBL, CD5, CD19, CD72, CD79A, CD79B, CSF2RB, DOK1, HCLS1, MS4A2/FCER1B, SYK and TEC. Phosphorylates PIRB at Tyr-794 and Tyr-824, which is required for PIRB interaction with PTPN6/SHP-1 and PTPN11/SHP-2. Promotes phosphorylation of SIRPA, PTPN6/SHP-1, PTPN11/SHP-2 and INPP5D/SHIP-1. Required for rapid phosphorylation of FER in response to FCER1 activation. Mediates KIT phosphorylation. Acts as an effector of EPOR (erythropoietin receptor) in controlling KIT expression and may play a role in erythroid differentiation during the switch between proliferation and maturation. Depending on the context, activates or inhibits several signaling cascades. Regulates phosphatidylinositol 3-kinase activity and AKT1 activation. Regulates activation of the MAP kinase signaling cascade, including activation of MAP2K1/MEK1, MAPK1/ERK2, MAPK3/ERK1, MAPK8/JNK1 and MAPK9/JNK2. Mediates activation of STAT5A and/or STAT5B. Phosphorylates LPXN on 'Tyr-72'. Kinase activity facilitates TLR4-TLR6 heterodimerization and signal initiation. Phosphorylates SCIMP on 'Tyr-96'; this enhances binding of SCIMP to TLR4, promoting the phosphorylation of TLR4, and a selective cytokine response to lipopolysaccharide in macrophages. Phosphorylates CLNK. Phosphorylates BCAR1/CAS and NEDD9/HEF1. This is Tyrosine-protein kinase Lyn (Lyn) from Mus musculus (Mouse).